The chain runs to 206 residues: Adenylate kinase (206 aa).

10–15 (GAGKGT) is an ATP binding site. An NMP region spans residues 30–59 (STGDMLRAAVAAGTPVGLKAKDIMASGGLV). Residues threonine 31, arginine 36, 57-59 (GLV), 85-88 (GFPR), and glutamine 92 contribute to the AMP site. The tract at residues 126–142 (NRVAETTARGEQVRADD) is LID. Arginine 127 provides a ligand contact to ATP. Residues arginine 139 and arginine 150 each coordinate AMP. Residue methionine 178 coordinates ATP.

The protein belongs to the adenylate kinase family. Monomer.

It is found in the cytoplasm. The enzyme catalyses AMP + ATP = 2 ADP. It functions in the pathway purine metabolism; AMP biosynthesis via salvage pathway; AMP from ADP: step 1/1. Its function is as follows. Catalyzes the reversible transfer of the terminal phosphate group between ATP and AMP. Plays an important role in cellular energy homeostasis and in adenine nucleotide metabolism. The sequence is that of Adenylate kinase from Nitrobacter winogradskyi (strain ATCC 25391 / DSM 10237 / CIP 104748 / NCIMB 11846 / Nb-255).